The following is a 382-amino-acid chain: Anhydro-N-acetylmuramic acid kinase (382 aa).

ATP is bound at residue 22-29 (GTSMDGVD).

It belongs to the anhydro-N-acetylmuramic acid kinase family.

The catalysed reaction is 1,6-anhydro-N-acetyl-beta-muramate + ATP + H2O = N-acetyl-D-muramate 6-phosphate + ADP + H(+). Its pathway is amino-sugar metabolism; 1,6-anhydro-N-acetylmuramate degradation. It participates in cell wall biogenesis; peptidoglycan recycling. Functionally, catalyzes the specific phosphorylation of 1,6-anhydro-N-acetylmuramic acid (anhMurNAc) with the simultaneous cleavage of the 1,6-anhydro ring, generating MurNAc-6-P. Is required for the utilization of anhMurNAc either imported from the medium or derived from its own cell wall murein, and thus plays a role in cell wall recycling. This Burkholderia lata (strain ATCC 17760 / DSM 23089 / LMG 22485 / NCIMB 9086 / R18194 / 383) protein is Anhydro-N-acetylmuramic acid kinase.